The sequence spans 68 residues: Large ribosomal subunit protein eL24 (68 aa).

Residues cysteine 7, cysteine 10, cysteine 33, and cysteine 37 each contribute to the Zn(2+) site. The segment at 7–37 (CSYCGREFEPGTGKMFVRNDGRVLFFCSSKC) adopts a C4-type zinc-finger fold.

Belongs to the eukaryotic ribosomal protein eL24 family. Part of the 50S ribosomal subunit. Forms a cluster with proteins L3 and L14. Zn(2+) serves as cofactor.

In terms of biological role, binds to the 23S rRNA. This Thermococcus onnurineus (strain NA1) protein is Large ribosomal subunit protein eL24.